The sequence spans 513 residues: Type-2 serine--tRNA ligase (513 aa).

A312 is an L-serine binding site. Residue C314 participates in Zn(2+) binding. Position 344 (R344) interacts with L-serine. Residues 344–346 (RWE) and 355–356 (RV) contribute to the ATP site. Residue 361 to 363 (RVE) participates in L-serine binding. Residues E363 and C467 each contribute to the Zn(2+) site. ATP is bound at residue R474.

This sequence belongs to the class-II aminoacyl-tRNA synthetase family. Type-2 seryl-tRNA synthetase subfamily. Homodimer. Zn(2+) serves as cofactor.

The protein localises to the cytoplasm. It carries out the reaction tRNA(Ser) + L-serine + ATP = L-seryl-tRNA(Ser) + AMP + diphosphate + H(+). It catalyses the reaction tRNA(Sec) + L-serine + ATP = L-seryl-tRNA(Sec) + AMP + diphosphate + H(+). It participates in aminoacyl-tRNA biosynthesis; selenocysteinyl-tRNA(Sec) biosynthesis; L-seryl-tRNA(Sec) from L-serine and tRNA(Sec): step 1/1. Its function is as follows. Catalyzes the attachment of serine to tRNA(Ser). Is also able to aminoacylate tRNA(Sec) with serine, to form the misacylated tRNA L-seryl-tRNA(Sec), which will be further converted into selenocysteinyl-tRNA(Sec). This is Type-2 serine--tRNA ligase (serS) from Methanothermobacter thermautotrophicus (strain ATCC 29096 / DSM 1053 / JCM 10044 / NBRC 100330 / Delta H) (Methanobacterium thermoautotrophicum).